Reading from the N-terminus, the 198-residue chain is Holliday junction branch migration complex subunit RuvA (198 aa).

The segment at 1 to 61 (MILYRIGEII…EYQYATYAFK (61 aa)) is domain I. The interval 62 to 139 (DFKERLLFVD…KMISPKDAAK (78 aa)) is domain II. The segment at 140–144 (INETT) is flexible linker. Positions 144–198 (TNTLSEVKETLKMVGFKTKQIDGALSKISSTDDVEKMIEEAIKLMSTQNYESATA) are domain III.

This sequence belongs to the RuvA family. Homotetramer. Forms an RuvA(8)-RuvB(12)-Holliday junction (HJ) complex. HJ DNA is sandwiched between 2 RuvA tetramers; dsDNA enters through RuvA and exits via RuvB. An RuvB hexamer assembles on each DNA strand where it exits the tetramer. Each RuvB hexamer is contacted by two RuvA subunits (via domain III) on 2 adjacent RuvB subunits; this complex drives branch migration. In the full resolvosome a probable DNA-RuvA(4)-RuvB(12)-RuvC(2) complex forms which resolves the HJ.

Its subcellular location is the cytoplasm. Functionally, the RuvA-RuvB-RuvC complex processes Holliday junction (HJ) DNA during genetic recombination and DNA repair, while the RuvA-RuvB complex plays an important role in the rescue of blocked DNA replication forks via replication fork reversal (RFR). RuvA specifically binds to HJ cruciform DNA, conferring on it an open structure. The RuvB hexamer acts as an ATP-dependent pump, pulling dsDNA into and through the RuvAB complex. HJ branch migration allows RuvC to scan DNA until it finds its consensus sequence, where it cleaves and resolves the cruciform DNA. This Mycoplasmopsis agalactiae (strain NCTC 10123 / CIP 59.7 / PG2) (Mycoplasma agalactiae) protein is Holliday junction branch migration complex subunit RuvA.